Reading from the N-terminus, the 245-residue chain is tRNA1(Val) (adenine(37)-N6)-methyltransferase (245 aa).

Belongs to the methyltransferase superfamily. tRNA (adenine-N(6)-)-methyltransferase family.

Its subcellular location is the cytoplasm. It catalyses the reaction adenosine(37) in tRNA1(Val) + S-adenosyl-L-methionine = N(6)-methyladenosine(37) in tRNA1(Val) + S-adenosyl-L-homocysteine + H(+). Functionally, specifically methylates the adenine in position 37 of tRNA(1)(Val) (anticodon cmo5UAC). This Enterobacter sp. (strain 638) protein is tRNA1(Val) (adenine(37)-N6)-methyltransferase.